The sequence spans 468 residues: Bone morphogenetic protein 3 (468 aa).

The signal sequence occupies residues 1 to 22; the sequence is MAGARGLLCLWLGYFCLNLAQG. Residues 23–358 constitute a propeptide that is removed on maturation; it reads QRPNLHLPGL…EQTLKKARRK (336 aa). Positions 29 to 53 are disordered; the sequence is LPGLRETEPSDRATGGSPSPDLRPH. Residues Asn-115, Asn-139, Asn-171, and Asn-216 are each glycosylated (N-linked (GlcNAc...) asparagine). The segment at 314 to 349 is disordered; the sequence is RKPYKSLQTQPPEKSRNKKKQRKGSHQKGQTLQFDE. Residues 329–339 are compositionally biased toward basic residues; sequence RNKKKQRKGSH. A compositionally biased stretch (polar residues) spans 340–349; the sequence is QKGQTLQFDE. Disulfide bonds link Cys-366–Cys-433, Cys-395–Cys-465, and Cys-399–Cys-467. N-linked (GlcNAc...) asparagine glycosylation is present at Asn-459.

The protein belongs to the TGF-beta family. As to quaternary structure, homodimer; disulfide-linked.

It is found in the secreted. In terms of biological role, negatively regulates bone density. Antagonizes the ability of certain osteogenic BMPs to induce osteoprogenitor differentiation and ossification. This chain is Bone morphogenetic protein 3 (Bmp3), found in Mus musculus (Mouse).